The sequence spans 362 residues: Molybdenum import ATP-binding protein ModC (362 aa).

One can recognise an ABC transporter domain in the interval 2 to 236 (VSPIEVRLQM…LDLPLAMGDD (235 aa)). 34–41 (GPSGSGKT) is an ATP binding site. In terms of domain architecture, Mop spans 297–362 (HSSILNRLPV…AQIKAVAVLA (66 aa)).

The protein belongs to the ABC transporter superfamily. Molybdate importer (TC 3.A.1.8) family. As to quaternary structure, the complex is composed of two ATP-binding proteins (ModC), two transmembrane proteins (ModB) and a solute-binding protein (ModA).

The protein localises to the cell inner membrane. It carries out the reaction molybdate(out) + ATP + H2O = molybdate(in) + ADP + phosphate + H(+). In terms of biological role, part of the ABC transporter complex ModABC involved in molybdenum import. Responsible for energy coupling to the transport system. In Pseudomonas syringae pv. tomato (strain ATCC BAA-871 / DC3000), this protein is Molybdenum import ATP-binding protein ModC.